Reading from the N-terminus, the 305-residue chain is Translation initiation factor eIF2B subunit alpha (305 aa).

An N6-acetyllysine modification is found at lysine 35.

The protein belongs to the eIF-2B alpha/beta/delta subunits family. Component of the translation initiation factor 2B (eIF2B) complex which is a heterodecamer of two sets of five different subunits: alpha, beta, gamma, delta and epsilon. Subunits alpha, beta and delta comprise a regulatory subcomplex and subunits epsilon and gamma comprise a catalytic subcomplex. Within the complex, the hexameric regulatory complex resides at the center, with the two heterodimeric catalytic subcomplexes bound on opposite sides.

It localises to the cytoplasm. The protein resides in the cytosol. Activated by the chemical integrated stress response (ISR) inhibitor ISRIB which stimulates guanine nucleotide exchange factor activity for both phosphorylated and unphosphorylated eIF2. Acts as a component of the translation initiation factor 2B (eIF2B) complex, which catalyzes the exchange of GDP for GTP on eukaryotic initiation factor 2 (eIF2) gamma subunit. Its guanine nucleotide exchange factor activity is repressed when bound to eIF2 complex phosphorylated on the alpha subunit, thereby limiting the amount of methionyl-initiator methionine tRNA available to the ribosome and consequently global translation is repressed. This is Translation initiation factor eIF2B subunit alpha (EIF2B1) from Pongo abelii (Sumatran orangutan).